The sequence spans 544 residues: Membrane protein insertase YidC (544 aa).

Residues 6–26 (NILLIGLLFVSFLLWQQWQAD) traverse the membrane as a helical segment. The tract at residues 34 to 58 (AAQTQSSIPASTVADSHSSDVPDAD) is disordered. The segment covering 39–49 (SSIPASTVADS) has biased composition (polar residues). A run of 4 helical transmembrane segments spans residues 345–365 (LLMF…LITL), 423–443 (GGCL…WVLL), 460–480 (LSVQ…MFVM), and 503–523 (VIFT…WLVG).

This sequence belongs to the OXA1/ALB3/YidC family. Type 1 subfamily. Interacts with the Sec translocase complex via SecD. Specifically interacts with transmembrane segments of nascent integral membrane proteins during membrane integration.

It is found in the cell inner membrane. Its function is as follows. Required for the insertion and/or proper folding and/or complex formation of integral membrane proteins into the membrane. Involved in integration of membrane proteins that insert both dependently and independently of the Sec translocase complex, as well as at least some lipoproteins. Aids folding of multispanning membrane proteins. This chain is Membrane protein insertase YidC, found in Shewanella halifaxensis (strain HAW-EB4).